Reading from the N-terminus, the 164-residue chain is FMN reductase (NADH) RutF (164 aa).

The protein belongs to the non-flavoprotein flavin reductase family. RutF subfamily.

It catalyses the reaction FMNH2 + NAD(+) = FMN + NADH + 2 H(+). Its function is as follows. Catalyzes the reduction of FMN to FMNH2 which is used to reduce pyrimidine by RutA via the Rut pathway. The chain is FMN reductase (NADH) RutF from Klebsiella pneumoniae subsp. pneumoniae (strain ATCC 700721 / MGH 78578).